The following is a 226-amino-acid chain: MKIKICGLTREEDVVLADSLGADLLGFIHARRSPRHLELGDVAELSSLIPDEKAVLVTETSETSRIMEAIDKTGIERIQLHSVSPETAGKIHESLHAEGYSLELTLAVPPLSSHICGHEFQGISGLILDSASGGRTGGTGKIIPPSDALELLALIRGMDPSLRVTLAGGLTLEFVRKNREYVSKFDCLDFNSGIETGPGVKDHEMMAELMNYIEGLPTRKGAIEEI.

Belongs to the TrpF family.

It carries out the reaction N-(5-phospho-beta-D-ribosyl)anthranilate = 1-(2-carboxyphenylamino)-1-deoxy-D-ribulose 5-phosphate. It functions in the pathway amino-acid biosynthesis; L-tryptophan biosynthesis; L-tryptophan from chorismate: step 3/5. This Methanothermobacter marburgensis (strain ATCC BAA-927 / DSM 2133 / JCM 14651 / NBRC 100331 / OCM 82 / Marburg) (Methanobacterium thermoautotrophicum) protein is N-(5'-phosphoribosyl)anthranilate isomerase (trpF).